Reading from the N-terminus, the 256-residue chain is Thiazole synthase (256 aa).

K95 serves as the catalytic Schiff-base intermediate with DXP. Residues G156, 182–183 (AG), and 204–205 (NT) contribute to the 1-deoxy-D-xylulose 5-phosphate site.

This sequence belongs to the ThiG family. Homotetramer. Forms heterodimers with either ThiH or ThiS.

Its subcellular location is the cytoplasm. The enzyme catalyses [ThiS sulfur-carrier protein]-C-terminal-Gly-aminoethanethioate + 2-iminoacetate + 1-deoxy-D-xylulose 5-phosphate = [ThiS sulfur-carrier protein]-C-terminal Gly-Gly + 2-[(2R,5Z)-2-carboxy-4-methylthiazol-5(2H)-ylidene]ethyl phosphate + 2 H2O + H(+). It functions in the pathway cofactor biosynthesis; thiamine diphosphate biosynthesis. Functionally, catalyzes the rearrangement of 1-deoxy-D-xylulose 5-phosphate (DXP) to produce the thiazole phosphate moiety of thiamine. Sulfur is provided by the thiocarboxylate moiety of the carrier protein ThiS. In vitro, sulfur can be provided by H(2)S. The sequence is that of Thiazole synthase from Escherichia coli O45:K1 (strain S88 / ExPEC).